A 514-amino-acid polypeptide reads, in one-letter code: tRNA-2-methylthio-N(6)-dimethylallyladenosine synthase (514 aa).

A disordered region spans residues 1–21; the sequence is MNEEQRKASSVDVLAERDKKA. Residues 68–186 form the MTTase N-terminal domain; sequence RTFLIKTYGC…LPEILEEAYL (119 aa). 6 residues coordinate [4Fe-4S] cluster: Cys-77, Cys-113, Cys-147, Cys-223, Cys-227, and Cys-230. The 232-residue stretch at 209-440 folds into the Radical SAM core domain; that stretch reads REGNIKAWVN…KKVGHYSQIA (232 aa). Positions 442 to 505 constitute a TRAM domain; sequence SKYEGQTVTV…QYSLNGSFVK (64 aa).

It belongs to the methylthiotransferase family. MiaB subfamily. In terms of assembly, monomer. Requires [4Fe-4S] cluster as cofactor.

The protein resides in the cytoplasm. The enzyme catalyses N(6)-dimethylallyladenosine(37) in tRNA + (sulfur carrier)-SH + AH2 + 2 S-adenosyl-L-methionine = 2-methylsulfanyl-N(6)-dimethylallyladenosine(37) in tRNA + (sulfur carrier)-H + 5'-deoxyadenosine + L-methionine + A + S-adenosyl-L-homocysteine + 2 H(+). Functionally, catalyzes the methylthiolation of N6-(dimethylallyl)adenosine (i(6)A), leading to the formation of 2-methylthio-N6-(dimethylallyl)adenosine (ms(2)i(6)A) at position 37 in tRNAs that read codons beginning with uridine. This is tRNA-2-methylthio-N(6)-dimethylallyladenosine synthase from Staphylococcus aureus (strain N315).